Reading from the N-terminus, the 473-residue chain is 3-isopropylmalate dehydratase large subunit (473 aa).

The tract at residues 289–319 (TVTWGTTPGQTAGITEPIPDPDDLPEEDRDT) is disordered. A compositionally biased stretch (polar residues) spans 291–301 (TWGTTPGQTAG). The span at 307 to 317 (PDPDDLPEEDR) shows a compositional bias: acidic residues. Residues Cys348, Cys408, and Cys411 each contribute to the [4Fe-4S] cluster site.

Belongs to the aconitase/IPM isomerase family. LeuC type 1 subfamily. As to quaternary structure, heterodimer of LeuC and LeuD. It depends on [4Fe-4S] cluster as a cofactor.

It carries out the reaction (2R,3S)-3-isopropylmalate = (2S)-2-isopropylmalate. The protein operates within amino-acid biosynthesis; L-leucine biosynthesis; L-leucine from 3-methyl-2-oxobutanoate: step 2/4. Functionally, catalyzes the isomerization between 2-isopropylmalate and 3-isopropylmalate, via the formation of 2-isopropylmaleate. The protein is 3-isopropylmalate dehydratase large subunit of Halorubrum lacusprofundi (strain ATCC 49239 / DSM 5036 / JCM 8891 / ACAM 34).